The sequence spans 271 residues: Formamidopyrimidine-DNA glycosylase (271 aa).

The Schiff-base intermediate with DNA role is filled by P2. E3 functions as the Proton donor in the catalytic mechanism. K57 acts as the Proton donor; for beta-elimination activity in catalysis. The DNA site is built by H90, R109, and K151. The segment at 236–270 (HVYGRGGESCTQCGNLLSEIKLGQRATVFCGLCQT) adopts an FPG-type zinc-finger fold. Residue R260 is the Proton donor; for delta-elimination activity of the active site.

It belongs to the FPG family. As to quaternary structure, monomer. The cofactor is Zn(2+).

It catalyses the reaction Hydrolysis of DNA containing ring-opened 7-methylguanine residues, releasing 2,6-diamino-4-hydroxy-5-(N-methyl)formamidopyrimidine.. It carries out the reaction 2'-deoxyribonucleotide-(2'-deoxyribose 5'-phosphate)-2'-deoxyribonucleotide-DNA = a 3'-end 2'-deoxyribonucleotide-(2,3-dehydro-2,3-deoxyribose 5'-phosphate)-DNA + a 5'-end 5'-phospho-2'-deoxyribonucleoside-DNA + H(+). In terms of biological role, involved in base excision repair of DNA damaged by oxidation or by mutagenic agents. Acts as a DNA glycosylase that recognizes and removes damaged bases. Has a preference for oxidized purines, such as 7,8-dihydro-8-oxoguanine (8-oxoG). Has AP (apurinic/apyrimidinic) lyase activity and introduces nicks in the DNA strand. Cleaves the DNA backbone by beta-delta elimination to generate a single-strand break at the site of the removed base with both 3'- and 5'-phosphates. The polypeptide is Formamidopyrimidine-DNA glycosylase (Shewanella woodyi (strain ATCC 51908 / MS32)).